The following is a 209-amino-acid chain: Ion-translocating oxidoreductase complex subunit G (209 aa).

The chain crosses the membrane as a helical span at residues 9–29 (ATTLALFAASTTAVTAVVNML). FMN phosphoryl threonine is present on Thr-175.

The protein belongs to the RnfG family. The complex is composed of six subunits: RnfA, RnfB, RnfC, RnfD, RnfE and RnfG. It depends on FMN as a cofactor.

The protein localises to the cell inner membrane. Functionally, part of a membrane-bound complex that couples electron transfer with translocation of ions across the membrane. The polypeptide is Ion-translocating oxidoreductase complex subunit G (Pectobacterium atrosepticum (strain SCRI 1043 / ATCC BAA-672) (Erwinia carotovora subsp. atroseptica)).